We begin with the raw amino-acid sequence, 484 residues long: Pyruvate kinase (484 aa).

R33 provides a ligand contact to substrate. K(+) contacts are provided by N35, S37, D67, and T68. N35 to H38 contacts ATP. Residues R74 and K155 each contribute to the ATP site. E221 contributes to the Mg(2+) binding site. Positions 244, 245, and 277 each coordinate substrate. D245 is a Mg(2+) binding site.

The protein belongs to the pyruvate kinase family. As to quaternary structure, homotetramer. It depends on Mg(2+) as a cofactor. K(+) is required as a cofactor.

It catalyses the reaction pyruvate + ATP = phosphoenolpyruvate + ADP + H(+). Its pathway is carbohydrate degradation; glycolysis; pyruvate from D-glyceraldehyde 3-phosphate: step 5/5. This chain is Pyruvate kinase (pyk), found in Chlamydia pneumoniae (Chlamydophila pneumoniae).